A 430-amino-acid polypeptide reads, in one-letter code: Small ribosomal subunit protein uS3m (430 aa).

Belongs to the universal ribosomal protein uS3 family.

Its subcellular location is the mitochondrion. In Marchantia polymorpha (Common liverwort), this protein is Small ribosomal subunit protein uS3m (RPS3).